The sequence spans 354 residues: Probable cinnamyl alcohol dehydrogenase 1 (354 aa).

Zn(2+) is bound by residues Cys47, His69, Glu70, Cys100, Cys103, Cys106, Cys114, and Cys163. Residues Thr167, 188–193, 211–216, Thr251, and 297–299 each bind NADP(+); these read GLGGLG, STSESK, and SVT.

The protein belongs to the zinc-containing alcohol dehydrogenase family. In terms of assembly, homodimer. The cofactor is Zn(2+).

The catalysed reaction is (E)-cinnamyl alcohol + NADP(+) = (E)-cinnamaldehyde + NADPH + H(+). The enzyme catalyses (E)-coniferol + NADP(+) = (E)-coniferaldehyde + NADPH + H(+). It carries out the reaction (E)-sinapyl alcohol + NADP(+) = (E)-sinapaldehyde + NADPH + H(+). It catalyses the reaction (E)-4-coumaroyl alcohol + NADP(+) = (E)-4-coumaraldehyde + NADPH + H(+). The catalysed reaction is (E)-caffeyl alcohol + NADP(+) = (E)-caffeyl aldehyde + NADPH + H(+). It participates in aromatic compound metabolism; phenylpropanoid biosynthesis. In terms of biological role, involved in lignin biosynthesis. Catalyzes the final step specific for the production of lignin monomers. Catalyzes the NADPH-dependent reduction of coniferaldehyde, 5-hydroxyconiferaldehyde, sinapaldehyde, 4-coumaraldehyde and caffeyl aldehyde to their respective alcohols. The sequence is that of Probable cinnamyl alcohol dehydrogenase 1 from Oryza sativa subsp. japonica (Rice).